Reading from the N-terminus, the 527-residue chain is MNGDLNSWDKFCNYLWFDKKLNIWLDISKINFTSKEINNLEDKFVDVFSSMKELENGAISNIDENRQVGHYWLRNPSISPSSKIAEEIRADINAISEFGKQILNGDIKNKNNKQYTDVLWIGIGGSGLGPLLITESLQKCSRGLNFSYIDNVDPFLISEKLEELSEKLSTTLFVVVSKSGGTPEPRIAMEIIKSHCEKNSLEWNSNAIAITMKDSKLFKKATSEYWLKIFNLQDWVGGRTSITSSVGLLPLALINENISEFIKGASLMDEATRISDFKNNPAALLSSAWYLTGDGTGKRDMVVLPYRDRLQVFSKYLQQLVMESLGKKFNRNGEVVNQGISVFGNKGSTDQHAYVQQLRDGIDNFFCIFIELLDTPSTNIFDDKENPKEYLSGFLQGTRSALSSENRQSITITLEKLNCFSLGALIALFERAVSFYAELVNINAYDQPGVEAGKKAAANIIEYQQKVSNLLDAGGEYSINDITSLFDNSVSESIFFILREMCFGNDNYLVKGDWSNPNSLVIQKLNS.

E323 acts as the Proton donor in catalysis. Active-site residues include H352 and K454.

The protein belongs to the GPI family.

It localises to the cytoplasm. It carries out the reaction alpha-D-glucose 6-phosphate = beta-D-fructose 6-phosphate. It participates in carbohydrate biosynthesis; gluconeogenesis. Its pathway is carbohydrate degradation; glycolysis; D-glyceraldehyde 3-phosphate and glycerone phosphate from D-glucose: step 2/4. In terms of biological role, catalyzes the reversible isomerization of glucose-6-phosphate to fructose-6-phosphate. This chain is Glucose-6-phosphate isomerase, found in Prochlorococcus marinus (strain MIT 9301).